The following is a 435-amino-acid chain: Tol-Pal system protein TolB (435 aa).

An N-terminal signal peptide occupies residues Met-1–Ala-20.

Belongs to the TolB family. As to quaternary structure, the Tol-Pal system is composed of five core proteins: the inner membrane proteins TolA, TolQ and TolR, the periplasmic protein TolB and the outer membrane protein Pal. They form a network linking the inner and outer membranes and the peptidoglycan layer.

The protein resides in the periplasm. Its function is as follows. Part of the Tol-Pal system, which plays a role in outer membrane invagination during cell division and is important for maintaining outer membrane integrity. The sequence is that of Tol-Pal system protein TolB from Francisella tularensis subsp. mediasiatica (strain FSC147).